The sequence spans 145 residues: Bacilliredoxin BH2759 (145 aa).

It belongs to the bacilliredoxin family.

The chain is Bacilliredoxin BH2759 from Halalkalibacterium halodurans (strain ATCC BAA-125 / DSM 18197 / FERM 7344 / JCM 9153 / C-125) (Bacillus halodurans).